The primary structure comprises 67 residues: MKKGLHPRYEETKVVCACGNVIVTASTVKDLRVEICSACHPFFTGKQKLVDSAGRIDRFNRRYKIRG.

4 residues coordinate Zn(2+): cysteine 16, cysteine 18, cysteine 36, and cysteine 39.

Belongs to the bacterial ribosomal protein bL31 family. Type A subfamily. As to quaternary structure, part of the 50S ribosomal subunit. Zn(2+) serves as cofactor.

Its function is as follows. Binds the 23S rRNA. The sequence is that of Large ribosomal subunit protein bL31 from Treponema pallidum (strain Nichols).